Here is a 138-residue protein sequence, read N- to C-terminus: Extracellular glycoprotein lacritin (138 aa).

Residues 1 to 19 form the signal peptide; the sequence is MKFTTLLFLAAVAGALVYA. The interval 20 to 79 is disordered; it reads EDASSDSTGADPAQEAGTSKPNEEISGPAEPASPPETTTTAQETSAAAVQGTAKVTSSRQ. Low complexity predominate over residues 43-67; sequence EISGPAEPASPPETTTTAQETSAAA. An N-linked (GlcNAc...) asparagine glycan is attached at Asn-119.

In terms of tissue distribution, expressed in secretory granules of many acinar cells in lacrimal gland and in scattered acinar cells of salivary glands.

It localises to the secreted. Functionally, modulates secretion by lacrimal acinar cells. The protein is Extracellular glycoprotein lacritin (LACRT) of Homo sapiens (Human).